The sequence spans 304 residues: m7GpppX diphosphatase (304 aa).

Substrate contacts are provided by residues glutamate 152, lysine 174, and 235–246 (HYLPSYYHLHVH). The Histidine triad motif motif lies at 242–246 (HLHVH). Histidine 244 acts as the Nucleophile in catalysis.

It belongs to the HIT family.

The protein localises to the cytoplasm. It is found in the nucleus. It catalyses the reaction a 5'-end (N(7)-methyl 5'-triphosphoguanosine)-ribonucleoside in mRNA + H2O = N(7)-methyl-GMP + a 5'-end diphospho-ribonucleoside in mRNA + 2 H(+). Decapping scavenger enzyme that catalyzes the cleavage of a residual cap structure following the degradation of mRNAs by the 3'-&gt;5' exosome-mediated mRNA decay pathway. Hydrolyzes cap analog structures like 7-methylguanosine nucleoside triphosphate (m7GpppG) with up to 10 nucleotide substrates (small capped oligoribonucleotides) and specifically releases 5'-phosphorylated RNA fragments and 7-methylguanosine monophosphate (m7GMP). Has no activity towards mRNA molecules longer than 25 nucleotides. May also play a role in the 5'-&gt;3 mRNA decay pathway; m7GDP, the downstream product released by the 5'-&gt;3' mRNA mediated decapping activity, may be also converted by DCS1 to m7GMP. Inhibits mRNA translation. Binds to the m7GpppG cap analog. The chain is m7GpppX diphosphatase (nhm1) from Schizosaccharomyces pombe (strain 972 / ATCC 24843) (Fission yeast).